Here is a 164-residue protein sequence, read N- to C-terminus: Ubiquitin-fold modifier-conjugating enzyme 1 (164 aa).

C116 acts as the Glycyl thioester intermediate in catalysis.

This sequence belongs to the ubiquitin-conjugating enzyme family. UFC1 subfamily.

Functionally, E2-like enzyme which forms an intermediate with UFM1 via a thioester linkage. This Drosophila sechellia (Fruit fly) protein is Ubiquitin-fold modifier-conjugating enzyme 1.